The primary structure comprises 375 residues: POU domain, class 3, transcription factor 1-A (375 aa).

Disordered regions lie at residues 1 to 29, 67 to 138, and 151 to 200; these read MAATAQYLPRNNSLPSNPLMHPDSDRMHQ, PASD…HQPL, and MLGP…PSSD. Composition is skewed to polar residues over residues 107-117, 129-138, and 151-160; these read VHQQSPSSHAW, SPSSNSHQPL, and MLGPQASSLH. Positions 162 to 177 are enriched in basic and acidic residues; it reads SMRDPLHDDPGVHDTQ. Residues 194–268 form the POU-specific domain; the sequence is EDAPSSDDLE…LLNKWLEETD (75 aa). Positions 286 to 345 form a DNA-binding region, homeobox; it reads KRKKRTSIEVGVKGALENHFLKCPKPSAHEITSLADSLQLEKEVVRVWFCNRRQKEKRMT.

This sequence belongs to the POU transcription factor family. Class-3 subfamily. In embryos at the neural fold stage, localized primarily in the anterior neural plate, and localized mostly in the anterior region of the nerve cord of neurula stage embryos. In tailbud stages, expressed predominantly in the eye and brain, with weak expression along the length of the nerve cord. In adults, expressed in skin and brain.

The protein resides in the nucleus. Its function is as follows. Acts as a transcription factor. May play a role in neuronal differentiation. The chain is POU domain, class 3, transcription factor 1-A (pou3f1-a) from Xenopus laevis (African clawed frog).